The sequence spans 231 residues: NAD(+) ADP-ribosyltransferase (231 aa).

The catalysed reaction is NAD(+) + (ADP-D-ribosyl)n-acceptor = nicotinamide + (ADP-D-ribosyl)n+1-acceptor + H(+).. Activity increases up to 5-6 times with Mg(2+) at 50 uM or higher ion concentration. 3-aminobenzamide (3-ABA) inhibits the activity by up to half and nicotinamide to a lesser extent. Zn(2+) inhibits the activity to half-maximal rate but at 500 uM concentration of the ion. Catalyzes auto- and hetero-ADP ribosylation and produces short oligomers by elongating the ADP-ribose chain (up to 6-mer). Binds DNA non-specifically but with high affinity. Forms very stable complexes with circular DNA wherein the circular DNA confers thermostability compared to linear DNA. The sequence is that of NAD(+) ADP-ribosyltransferase from Saccharolobus solfataricus (Sulfolobus solfataricus).